The primary structure comprises 424 residues: Tubulin-specific chaperone cofactor E-like protein (424 aa).

A phosphoserine mark is found at S18 and S41. LRR repeat units lie at residues 73–98 (CAHV…IVSN), 99–123 (VPQL…TCAG), 124–147 (SFSG…HMIL), 150–172 (LPDL…PSIC), 173–197 (CHSL…KLGV), 199–224 (FPSL…SLAR), and 226–250 (FPNL…KLNS). The 42-residue stretch at 262-303 (IPLLQPYTTEERRKLVIARLPSVSKLNGSVVTDGEREDSERF) folds into the LRRCT domain. Residues 334 to 424 (AEVDLRPQSS…DKIYVESKTK (91 aa)) form the Ubiquitin-like domain. Residues 349-375 (HFNDQVEEMSIRLDQTVAELKKQLKTL) adopt a coiled-coil conformation.

In terms of tissue distribution, abundantly expressed in testis, but is also present in several tissues at a much lower level.

Its subcellular location is the cytoplasm. The protein resides in the cytoskeleton. Functionally, acts as a regulator of tubulin stability. The protein is Tubulin-specific chaperone cofactor E-like protein (TBCEL) of Homo sapiens (Human).